We begin with the raw amino-acid sequence, 274 residues long: Guanylyl cyclase 1 (274 aa).

In terms of assembly, functions both as monomer and homooligomer. Mg(2+) serves as cofactor.

It catalyses the reaction GTP = 3',5'-cyclic GMP + diphosphate. It participates in nucleotide metabolism. Functionally, magnesium-dependent guanylyl cyclase that catalyzes the formation of guanosine 3',5'-cyclic monophosphate (cGMP) from guanosine 5'-triphosphate (GTP). Can also use ATP as substrate with a low activity. This chain is Guanylyl cyclase 1, found in Arabidopsis thaliana (Mouse-ear cress).